Reading from the N-terminus, the 123-residue chain is Sirohydrochlorin cobaltochelatase (123 aa).

The active-site Proton acceptor is the H9. H9 is a binding site for Co(2+). Residues E43 and 68 to 73 (FAAGMH) contribute to the substrate site. H73 is a binding site for Co(2+).

Belongs to the CbiX family. CbiXS subfamily. As to quaternary structure, homotetramer; dimer of dimers.

It carries out the reaction Co-sirohydrochlorin + 2 H(+) = sirohydrochlorin + Co(2+). It functions in the pathway cofactor biosynthesis; adenosylcobalamin biosynthesis; cob(II)yrinate a,c-diamide from sirohydrochlorin (anaerobic route): step 1/10. Functionally, catalyzes the insertion of Co(2+) into sirohydrochlorin as part of the anaerobic pathway to cobalamin biosynthesis. The protein is Sirohydrochlorin cobaltochelatase of Sulfolobus acidocaldarius (strain ATCC 33909 / DSM 639 / JCM 8929 / NBRC 15157 / NCIMB 11770).